Consider the following 194-residue polypeptide: Putative manganese efflux pump MntP (194 aa).

The next 6 membrane-spanning stretches (helical) occupy residues 3–23 (FYAT…VAVC), 40–60 (GFIF…LGLY), 65–85 (IIQW…GRMI), 109–129 (LIAT…GLAF), 134–154 (IVHT…LGML), and 169–189 (IIGG…HLDL).

This sequence belongs to the MntP (TC 9.B.29) family.

The protein localises to the cell inner membrane. In terms of biological role, probably functions as a manganese efflux pump. The polypeptide is Putative manganese efflux pump MntP (Proteus mirabilis (strain HI4320)).